Consider the following 1538-residue polypeptide: CLIP-associating protein 1 (1538 aa).

HEAT repeat units lie at residues 87 to 124 (AQIGTVLPSLIDRLGDAKDSVREQDQTLLLKIMDQAAN) and 163 to 200 (LTLSKIVPHICNLLGDPNSQVRDAAINSLVEIYRHVGE). A disordered region spans residues 235-292 (SANDKNFDDEDSVDGNRPSSASSTSSKAPPSSRRNVGMGTTRRLGSSTLGSKSSAAKE). The residue at position 246 (S246) is a Phosphoserine. The span at 251–268 (RPSSASSTSSKAPPSSRR) shows a compositional bias: low complexity. HEAT repeat units lie at residues 405 to 440 (HGAEAIMPTIFNLIPNSAKIMATSGVVAVRLIIRHT) and 441 to 477 (HIPRLIPVITSNCTSKSVAVRRRCFEFLDLLLQEWQT). The disordered stretch occupies residues 543–783 (SDSIVSLPQS…DRFGLGQPGR (241 aa)). Phosphoserine is present on residues S545, S548, S558, S559, and S568. The segment covering 548-567 (SLPQSDRSSSSSQESLNRPL) has biased composition (low complexity). Over residues 574–594 (TGSTTSRASTVSTKSVSTTGS) the composition is skewed to low complexity. A Phosphoserine modification is found at S600. A compositionally biased stretch (low complexity) spans 606–628 (AAASAKSKVSSSSGTTPFSSAAA). Phosphoserine occurs at positions 636, 646, 647, and 649. Positions 645–658 (QSSGSATNVASTPD) are enriched in polar residues. At T656 the chain carries Phosphothreonine. The tract at residues 662–785 (RSRAKVVSQS…FGLGQPGRIP (124 aa)) is interaction with microtubules, MAPRE1 and MAPRE3. The span at 673–692 (RSRSANPAGAGSRSSSPGKL) shows a compositional bias: low complexity. Residues S684, S688, S695, and S705 each carry the phosphoserine modification. Residues 693–705 (LGSGYGGLTGGSS) are compositionally biased toward gly residues. The residue at position 711 (T711) is a Phosphothreonine. S714 is subject to Phosphoserine. The span at 724–733 (QGCSRETSPN) shows a compositional bias: polar residues. 3 positions are modified to phosphoserine: S787, S797, and S823. The stretch at 974–1011 (QQFNILMRFIVDQTQTPNLKVKVAILKYIESLARQMDP) is one HEAT 5 repeat. Disordered regions lie at residues 1080–1120 (HLKN…CSHG) and 1136–1156 (AKHPPPFSQPNSIPTAPSHKA). Residues 1082 to 1097 (KNSSNTSVGSPSNTIG) show a composition bias toward polar residues. The residue at position 1091 (S1091) is a Phosphoserine. Phosphothreonine is present on residues T1095 and T1099. Residues 1106 to 1115 (SRTSPLTSPT) are compositionally biased toward low complexity. S1113 is modified (phosphoserine). S1196 and S1223 each carry phosphoserine. Residues 1215 to 1238 (VSRDGGAASPATEGRGGSEVEGGR) are disordered. The segment at 1254 to 1538 (RAFPGPRARD…SSSSDVSTHS (285 aa)) is interaction with CLIP2. Residues 1254–1538 (RAFPGPRARD…SSSSDVSTHS (285 aa)) are interaction with PHLDB2 and RSN. The interval 1256–1538 (FPGPRARDYN…SSSSDVSTHS (283 aa)) is localization to kinetochores. Residues 1299 to 1330 (DHSDLVADLLKELSNHNERVEERKGALLELLK) are a coiled coil. 2 HEAT repeats span residues 1342-1379 (EHFKTILLLLLETLGDKDHSIRALALRVLREILRNQPA) and 1460-1497 (QLLVDIIPGLLQGYDNTESSVRKASVFCLVAIYSVIGE).

Belongs to the CLASP family. Interacts with CLIP2, ERC1, MAPRE1, MAPRE3, microtubules, PHLDB2 and RSN. The interaction with ERC1 may be mediated by PHLDB2. Interacts with GCC2; recruits CLASP1 to Golgi membranes. Interacts with MACF1. Interacts with mtcl2 and MTCL1.

The protein localises to the cytoplasm. Its subcellular location is the cytoskeleton. It is found in the microtubule organizing center. It localises to the centrosome. The protein resides in the chromosome. The protein localises to the centromere. Its subcellular location is the kinetochore. It is found in the spindle. It localises to the golgi apparatus. The protein resides in the trans-Golgi network. Its function is as follows. Microtubule plus-end tracking protein that promotes the stabilization of dynamic microtubules. Involved in the nucleation of noncentrosomal microtubules originating from the trans-Golgi network (TGN). Required for the polarization of the cytoplasmic microtubule arrays in migrating cells towards the leading edge of the cell. May act at the cell cortex to enhance the frequency of rescue of depolymerizing microtubules by attaching their plus-ends to cortical platforms composed of ERC1 and PHLDB2. This cortical microtubule stabilizing activity is regulated at least in part by phosphatidylinositol 3-kinase signaling. Also performs a similar stabilizing function at the kinetochore which is essential for the bipolar alignment of chromosomes on the mitotic spindle. This chain is CLIP-associating protein 1 (CLASP1), found in Homo sapiens (Human).